The primary structure comprises 151 residues: Group 10 secretory phospholipase A2 (151 aa).

A signal peptide spans 1-17 (MLLLLLLLLLGPGPGFS). A propeptide spanning residues 18–28 (EATRRSHVYKR) is cleaved from the precursor. Cystine bridges form between cysteine 39/cysteine 97, cysteine 53/cysteine 143, cysteine 55/cysteine 71, cysteine 70/cysteine 125, cysteine 76/cysteine 150, cysteine 77/cysteine 118, cysteine 86/cysteine 111, and cysteine 104/cysteine 116. The Ca(2+) site is built by tyrosine 54, glycine 56, and glycine 58. The active site involves histidine 74. Aspartate 75 is a Ca(2+) binding site. Residue aspartate 119 is part of the active site.

This sequence belongs to the phospholipase A2 family. As to quaternary structure, interacts with PLA2R1; this interaction mediates PLA2G10 clearance and inactivation. Ca(2+) serves as cofactor. Expressed at high levels in testis and the gastrointestinal tract including stomach and colon. Expressed at lower levels in other tissues including small intestine, uterus, oviduct, lung, thymus, spleen and brain. Expressed in Paneth-like secretory epithelial cells of the colon. Expressed in gastric and ileac epithelial cells and in glandular epithelium of intestinal mucosa (at protein level). Expressed in late spermatogenic cells, spermatocytes and spermatids, but not spermatogonia in seminiferous tubules (at protein level). Expressed mainly in the apical side of endometrial epithelial cells and in the interstitium beneath the epithelium of uterus (at protein level). Expressed in resident spleen macrophages (at protein level). Expressed at outermost layer of hair follicles. Expressed in dorsal root ganglia in both NEFH-positive A-fibers and PRPH-positive C-fibers (at protein level).

The protein localises to the secreted. The protein resides in the lysosome. It localises to the cytoplasmic vesicle. Its subcellular location is the secretory vesicle. It is found in the acrosome. The catalysed reaction is a 1,2-diacyl-sn-glycero-3-phosphocholine + H2O = a 1-acyl-sn-glycero-3-phosphocholine + a fatty acid + H(+). The enzyme catalyses 1-hexadecanoyl-2-(9Z-octadecenoyl)-sn-glycero-3-phosphocholine + H2O = 1-hexadecanoyl-sn-glycero-3-phosphocholine + (9Z)-octadecenoate + H(+). It carries out the reaction 1-octadecanoyl-2-(5Z,8Z,11Z,14Z-eicosatetraenoyl)-sn-glycero-3-phosphocholine + H2O = 1-octadecanoyl-sn-glycero-3-phosphocholine + (5Z,8Z,11Z,14Z)-eicosatetraenoate + H(+). It catalyses the reaction 1,2-dihexadecanoyl-sn-glycero-3-phosphocholine + H2O = 1-hexadecanoyl-sn-glycero-3-phosphocholine + hexadecanoate + H(+). The catalysed reaction is 1-hexadecanoyl-2-(9Z-octadecenoyl)-sn-glycero-3-phosphoglycerol + H2O = 1-hexadecanoyl-sn-glycero-3-phosphoglycerol + (9Z)-octadecenoate + H(+). The enzyme catalyses 1,2-dihexadecanoyl-sn-glycero-3-phospho-(1'-sn-glycerol) + H2O = 1-hexadecanoyl-sn-glycero-3-phospho-(1'-sn-glycerol) + hexadecanoate + H(+). It carries out the reaction 1-hexadecanoyl-2-(9Z-octadecenoyl)-sn-glycero-3-phospho-L-serine + H2O = 1-hexadecanoyl-sn-glycero-3-phospho-L-serine + (9Z)-octadecenoate + H(+). It catalyses the reaction 1-hexadecanoyl-2-(9Z,12Z-octadecadienoyl)-sn-glycero-3-phosphoethanolamine + H2O = 1-hexadecanoyl-sn-glycero-3-phosphoethanolamine + (9Z,12Z)-octadecadienoate + H(+). The catalysed reaction is 1-hexadecanoyl-2-(9Z-octadecenoyl)-sn-glycero-3-phosphate + H2O = 1-hexadecanoyl-sn-glycero-3-phosphate + (9Z)-octadecenoate + H(+). The enzyme catalyses 1-O-hexadecyl-2-acetyl-sn-glycero-3-phosphocholine + H2O = 1-O-hexadecyl-sn-glycero-3-phosphocholine + acetate + H(+). Functionally, secretory calcium-dependent phospholipase A2 that primarily targets extracellular phospholipids. Hydrolyzes the ester bond of the fatty acyl group attached at sn-2 position of phospholipids with preference for phosphatidylcholines and phosphatidylglycerols over phosphatidylethanolamines. Preferentially releases sn-2 omega-6 and omega-3 polyunsaturated fatty acyl (PUFA) chains over saturated fatty acyls. Contributes to phospholipid remodeling of very low-density lipoprotein (VLDL), low-density lipoprotein (LDL) and high-density lipoprotein (HDL) particles. Hydrolyzes LDL phospholipids releasing unsaturated fatty acids that regulate macrophage differentiation toward foam cells. Efficiently hydrolyzes and inactivates PAF, a potent lipid mediator present in oxidized LDL. May act in an autocrine and paracrine manner. Secreted by lung epithelium, targets membrane phospholipids of infiltrating eosinophils, releasing arachidonate and boosting eicosanoid and cysteinyl leukotriene synthesis involved in airway inflammatory response. Secreted by gut epithelium, hydrolyzes dietary and biliary phosphatidylcholines in the gastrointestinal lumen, thereby regulating adipogenesis and body weight. Plays a stem cell regulator role in colon epithelium. Within intracellular compartment, mediates Paneth-like cell differentiation and its stem cell supporting functions by inhibiting Wnt signaling pathway in intestinal stem cell (ISC). Secreted in the intestinal lumen upon inflammation, acts in an autocrine way and promotes prostaglandin E2 synthesis that stimulates the Wnt signaling pathway in ISCs and tissue regeneration. May participate in hair follicle morphogenesis by regulating phosphatidylethanolamines metabolism at the outermost epithelial layer and facilitating melanin synthesis. By generating lysophosphatidylcholines (LPCs) at sperm acrosome controls sperm cell capacitation, acrosome reaction and overall fertility. May promote neurite outgrowth in neuron fibers involved in nociception. Contributes to lipid remodeling of cellular membranes and generation of lipid mediators involved in pathogen clearance. Cleaves sn-2 fatty acyl chains of phosphatidylglycerols and phosphatidylethanolamines, which are major components of membrane phospholipids in bacteria. Displays bactericidal activity against Gram-positive bacteria by directly hydrolyzing phospholipids of the bacterial membrane. In pulmonary epithelium, may contribute to host defense response against adenoviral infection. Prevents adenovirus entry into host cells by hydrolyzing host cell plasma membrane, releasing C16:0 LPCs that inhibit virus-mediated membrane fusion and viral infection. Likely prevents adenoviral entry into the endosomes of host cells. May play a role in maturation and activation of innate immune cells including macrophages, group 2 innate lymphoid cells and mast cells. The chain is Group 10 secretory phospholipase A2 (Pla2g10) from Mus musculus (Mouse).